Reading from the N-terminus, the 840-residue chain is Lysine-specific demethylase JMJ27 (840 aa).

The span at 1 to 10 (MEKMRGKRIR) shows a compositional bias: basic residues. Residues 1-52 (MEKMRGKRIRPRDSGELVEDGRSESERKTRKKENDVVSKGRIGRGRGRGEVS) are disordered. Positions 11-38 (PRDSGELVEDGRSESERKTRKKENDVVS) are enriched in basic and acidic residues. Zn(2+) contacts are provided by cysteine 80, cysteine 83, cysteine 95, cysteine 98, cysteine 104, cysteine 107, cysteine 124, and cysteine 127. An RING-type; degenerate zinc finger spans residues 80–127 (CHHCKILTSESDLIFCSKCNKKCYCFDCIKRSYSERTHEEVRAACPFC). Residues 502–798 (PKSGILNLAT…ECLRLTQEFR (297 aa)) enclose the JmjC domain. Histidine 546 and aspartate 548 together coordinate Fe cation. Residues 594–678 (KEASELENKS…ETDGNTNERS (85 aa)) form a disordered region. Basic and acidic residues predominate over residues 595-620 (EASELENKSMKEVDESKKDLKDKAAN). Over residues 621–631 (EEQSNNSSRPS) the composition is skewed to polar residues. Over residues 635–646 (EAEKVIISKEDN) the composition is skewed to basic and acidic residues. Positions 647 to 659 (PTQPAVSTSVESI) are enriched in polar residues. Residues 660–678 (QEQKLDAPKETDGNTNERS) show a composition bias toward basic and acidic residues. A Fe cation-binding site is contributed by histidine 766.

The protein belongs to the JARID1 histone demethylase family. As to quaternary structure, interacts with RPN1A. Requires Fe(2+) as cofactor. As to expression, expressed in seedlings, inflorescences, flowers and siliques, and, at low levels, in roots, leaves (including vascular bundles) and stems. Particularly observed in stomatal guard cells.

It is found in the nucleus. It localises to the cytoplasm. The catalysed reaction is N(6),N(6)-dimethyl-L-lysyl(9)-[histone H3] + 2-oxoglutarate + O2 = N(6)-methyl-L-lysyl(9)-[histone H3] + formaldehyde + succinate + CO2. It catalyses the reaction N(6)-methyl-L-lysyl(9)-[histone H3] + 2-oxoglutarate + O2 = L-lysyl(9)-[histone H3] + formaldehyde + succinate + CO2. It carries out the reaction N(6),N(6)-dimethyl-L-lysyl(9)-[histone H3] + 2 2-oxoglutarate + 2 O2 = L-lysyl(9)-[histone H3] + 2 formaldehyde + 2 succinate + 2 CO2. Histone demethylase that demethylates 'Lys-9' (H3K9me) of histone H3 with a specific activity for H3K9me1 and H3K9me2. No activity on H3K4, H3K27, H3K36, H3R2 and H4R3 methyl marks, but weak activity on H3K9me3. Involved in regulation of gene expression. Regulates flowering time by repressing the major flowering regulator CONSTANS (CO) and promoting FLOWERING LOCUS C (FLC). Exhibits a positive impact on abscisic acid- (ABA), hydrogen peroxide- (H(2)O(2)) and calcium- (Ca(2+)) induced stomatal closure. Promotes stomatal-closure-dependent drought-stress responses through its histone demethylase activity toward at least GOLS2 and RD20 loci, thus protecting them from silencing by removing H3K9me2 marks in drought conditions. Required for plant defenses leading to resistance against the virulent bacterial pathogen Pseudomonas syringae pv. tomato DC3000 (Pst DC3000) via a negative regulation of WRKY25 (a repressor of defense) and by triggering the expression of several pathogenesis-related (PR) proteins (e.g. PR1, PR3, PR4 and PR5). This is Lysine-specific demethylase JMJ27 from Arabidopsis thaliana (Mouse-ear cress).